A 252-amino-acid polypeptide reads, in one-letter code: tRNA (guanine-N(1)-)-methyltransferase (252 aa).

S-adenosyl-L-methionine-binding positions include Gly113 and 133–138 (IGDYVL).

The protein belongs to the RNA methyltransferase TrmD family. Homodimer.

The protein localises to the cytoplasm. The catalysed reaction is guanosine(37) in tRNA + S-adenosyl-L-methionine = N(1)-methylguanosine(37) in tRNA + S-adenosyl-L-homocysteine + H(+). Specifically methylates guanosine-37 in various tRNAs. This is tRNA (guanine-N(1)-)-methyltransferase from Xanthomonas campestris pv. campestris (strain 8004).